Here is a 286-residue protein sequence, read N- to C-terminus: Ribosomal RNA small subunit methyltransferase A (286 aa).

Positions 28, 30, 55, 77, 103, and 123 each coordinate S-adenosyl-L-methionine.

The protein belongs to the class I-like SAM-binding methyltransferase superfamily. rRNA adenine N(6)-methyltransferase family. RsmA subfamily.

The protein resides in the cytoplasm. It catalyses the reaction adenosine(1518)/adenosine(1519) in 16S rRNA + 4 S-adenosyl-L-methionine = N(6)-dimethyladenosine(1518)/N(6)-dimethyladenosine(1519) in 16S rRNA + 4 S-adenosyl-L-homocysteine + 4 H(+). In terms of biological role, specifically dimethylates two adjacent adenosines (A1518 and A1519) in the loop of a conserved hairpin near the 3'-end of 16S rRNA in the 30S particle. May play a critical role in biogenesis of 30S subunits. The sequence is that of Ribosomal RNA small subunit methyltransferase A from Bradyrhizobium sp. (strain ORS 278).